The sequence spans 2542 residues: Zinc finger FYVE domain-containing protein 26 (2542 aa).

2 disordered regions span residues 591-658 (HLPE…GPHT) and 740-811 (VTSN…QVEA). Residues Ser-612 and Ser-616 each carry the phosphoserine modification. Residues 752–772 (RRYRPTAKRHSSLRRGRRTRR) show a composition bias toward basic residues. Low complexity predominate over residues 785–803 (SLEGTSSELSTSTSEGSLS). Ser-798 bears the Phosphoserine mark. Residues 866 to 891 (MFVERYQEVIQELARVEHKIENQNSD) are a coiled coil. The segment at 1273–1292 (SPRPSENPSAERKSDSSPKD) is disordered. Residues 1281–1290 (SAERKSDSSP) are compositionally biased toward basic and acidic residues. The stretch at 1495-1522 (VSDMAVPEELKSELQRKLTELRVYQKIL) forms a coiled coil. A phosphoserine mark is found at Ser-1739, Ser-1761, Ser-1783, and Ser-1785. The segment at 1746–1807 (PVHQASDPET…LEFVPPETPP (62 aa)) is disordered. Low complexity predominate over residues 1757–1779 (SRSSSAEFSAAAAAPAPAAPGSA). The FYVE-type zinc-finger motif lies at 1815–1875 (DETESMCMVC…VCDQCYSYYN (61 aa)). Zn(2+)-binding residues include Cys-1821, Cys-1824, Cys-1838, Cys-1841, Cys-1846, Cys-1849, Cys-1867, and Cys-1870.

The protein belongs to the ZFYVE26 family. As to quaternary structure, interacts with AP5Z1, AP5B1, AP5S1 and SPG11. Interacts with TTC19 and KIF13A.

Its subcellular location is the cytoplasm. It localises to the cytoskeleton. The protein localises to the microtubule organizing center. It is found in the centrosome. The protein resides in the midbody. Phosphatidylinositol 3-phosphate-binding protein required for the abscission step in cytokinesis: recruited to the midbody during cytokinesis and acts as a regulator of abscission. May also be required for efficient homologous recombination DNA double-strand break repair. In Rattus norvegicus (Rat), this protein is Zinc finger FYVE domain-containing protein 26 (Zfyve26).